Reading from the N-terminus, the 218-residue chain is Adenylate kinase (218 aa).

Residue 10-15 (GAGKGT) coordinates ATP. Positions 30–59 (STGDMFRAAMANQTEMGRLAKSFIDKGELV) are NMP. AMP is bound by residues Thr31, Arg36, 57 to 59 (ELV), 86 to 89 (GYPR), and Gln93. An LID region spans residues 127 to 165 (GRFICRSCGSTYHKVFNPTKVEGTCDVCGGHEFFQREDD). Arg128 is a binding site for ATP. Zn(2+) is bound by residues Cys131 and Cys134. 137-138 (TY) contributes to the ATP binding site. Residues Cys151 and Cys154 each coordinate Zn(2+). Positions 162 and 173 each coordinate AMP. Gln201 is a binding site for ATP.

Belongs to the adenylate kinase family. Monomer.

It is found in the cytoplasm. It carries out the reaction AMP + ATP = 2 ADP. The protein operates within purine metabolism; AMP biosynthesis via salvage pathway; AMP from ADP: step 1/1. Functionally, catalyzes the reversible transfer of the terminal phosphate group between ATP and AMP. Plays an important role in cellular energy homeostasis and in adenine nucleotide metabolism. This is Adenylate kinase from Streptococcus thermophilus (strain CNRZ 1066).